The primary structure comprises 405 residues: Coiled-coil domain-containing protein 91 (405 aa).

Positions 1–16 are GGA1-binding motif; it reads MDDDDFGGFEAAETFD. Residues 1–27 form a disordered region; sequence MDDDDFGGFEAAETFDGGNGETQTTSP. Phosphoserine occurs at positions 43 and 46. A coiled-coil region spans residues 126-376; the sequence is GANVSNIQLR…QKRLDQVIRQ (251 aa). The homodimerization stretch occupies residues 210-377; the sequence is LSIIVDEYKH…KRLDQVIRQR (168 aa).

Homodimer. Interacts with GGA1, GGA2 and AP1G1.

The protein localises to the membrane. It is found in the golgi apparatus. The protein resides in the trans-Golgi network membrane. It localises to the trans-Golgi network. Its function is as follows. Involved in the regulation of membrane traffic through the trans-Golgi network (TGN). Functions in close cooperation with the GGAs in the sorting of hydrolases to lysosomes. This Pongo abelii (Sumatran orangutan) protein is Coiled-coil domain-containing protein 91 (CCDC91).